The sequence spans 478 residues: Septin-4 (478 aa).

Positions 1 to 115 are disordered; sequence MDRSLGWQGN…RSPWGKLDPY (115 aa). Basic and acidic residues predominate over residues 13–26; the sequence is PEDRTEAGIKRFLE. Positions 95–108 are enriched in low complexity; sequence APAPLSPSARPRSP. Serine 117 and serine 118 each carry phosphoserine. The 274-residue stretch at 141-414 folds into the Septin-type G domain; it reads KGFDFTLMVA…ENYRAQCIQS (274 aa). A G1 motif region spans residues 151–158; that stretch reads GESGLGKS. Residues 151–158 and threonine 185 contribute to the GTP site; that span reads GESGLGKS. Positions 208-211 are G3 motif; it reads DTPG. The interval 289-292 is G4 motif; that stretch reads AKAD. GTP is bound at residue 290–298; the sequence is KADTLTPPE. Serine 325 bears the Phosphoserine mark. GTP is bound by residues glycine 348 and arginine 363. The disordered stretch occupies residues 428-448; that stretch reads LTRESGTDFPIPAVPPGTDPE. At serine 432 the chain carries Phosphoserine. Threonine 434 is subject to Phosphothreonine. A coiled-coil region spans residues 447-478; the sequence is PETEKLIREKDEELRRMQEMLHKIQKQMKENY.

The protein belongs to the TRAFAC class TrmE-Era-EngA-EngB-Septin-like GTPase superfamily. Septin GTPase family. In terms of assembly, septins polymerize into heterooligomeric protein complexes that form filaments, and can associate with cellular membranes, actin filaments and microtubules. GTPase activity is required for filament formation. Interacts with SEPTIN8. In a mesenchymal cell line, interacts with SEPTIN9 isoform 2 variants HNA Trp-106 and Phe-111, but not the wild type SEPTIN9. Component of a septin core octameric complex consisting of SEPTIN12, SEPTIN7, SEPTIN6 and SEPTIN2 or SEPTIN4 in the order 12-7-6-2-2-6-7-12 or 12-7-6-4-4-6-7-12. Interacts with SEPTIN14 (via C-terminus). Interacts with DYRK1A. Interacts with SLC6A3/DAT and SNCA/alpha-synuclein. Interacts with STX1A; in the striatum. Interacts with XIAP (via BIR3 domain) following the induction of apoptosis. Interacts with AREL1 (via HECT domain); in the cytoplasm following induction of apoptosis. As to quaternary structure, part of a complex composed of SEPTIN4 isoform ARTS, XIAP and BCL2, within the complex interacts with both BCL2 (via BH3 domain) and XIAP, ARTS acts as a scaffold protein and stabilizes the complex. Interacts with XIAP (via BIR3 domain) following the induction of apoptosis. Post-translationally, phosphorylated by DYRK1A. Ubiquitinated by AREL1. As to expression, widely expressed in adult and fetal tissues with highest expression in adult brain (at protein level), heart, liver and adrenal gland and fetal heart, kidney, liver and lung. Expressed in presynaptic terminals of dopaminergic neurons projecting from the substantia nigra pars compacta to the striatum (at protein level). Expressed in axonal varicosities in dopaminergic nerve terminals (at protein level). Expressed in the putamen and in the adjacent cerebral cortex (at protein level). Expressed in colonic crypts (at protein level). Also expressed in colorectal cancers and malignant melanomas. Expressed in platelets. In terms of tissue distribution, highly expressed in the brain and heart.

Its subcellular location is the cytoplasm. The protein localises to the cell projection. The protein resides in the cilium. It is found in the flagellum. It localises to the cytoplasmic vesicle. Its subcellular location is the secretory vesicle. The protein localises to the axon. The protein resides in the dendrite. It is found in the perikaryon. It localises to the synapse. Its subcellular location is the mitochondrion. The protein localises to the nucleus. In terms of biological role, filament-forming cytoskeletal GTPase. Pro-apoptotic protein involved in LGR5-positive intestinal stem cell and Paneth cell expansion in the intestines, via its interaction with XIAP. May also play a role in the regulation of cell fate in the intestine. Positive regulator of apoptosis involved in hematopoietic stem cell homeostasis; via its interaction with XIAP. Negative regulator of repair and hair follicle regeneration in response to injury, due to inhibition of hair follicle stem cell proliferation, potentially via its interaction with XIAP. Plays an important role in male fertility and sperm motility. During spermiogenesis, essential for the establishment of the annulus (a fibrous ring structure connecting the midpiece and the principal piece of the sperm flagellum) which is a requisite for the structural and mechanical integrity of the sperm. Involved in the migration of cortical neurons and the formation of neuron leading processes during embryonic development. Required for dopaminergic metabolism in presynaptic autoreceptors; potentially via activity as a presynaptic scaffold protein. Functionally, required for the induction of cell death mediated by TGF-beta and possibly by other apoptotic stimuli. Induces apoptosis through binding and inhibition of XIAP resulting in significant reduction in XIAP levels, leading to caspase activation and cell death. Mediates the interaction between BCL2 and XIAP, thereby positively regulating the ubiquitination and degradation of BCL2 and promoting apoptosis. The chain is Septin-4 from Homo sapiens (Human).